Reading from the N-terminus, the 191-residue chain is Protein HP-20 homolog (191 aa).

The signal sequence occupies residues 1-16; sequence MADLRILVSIILMTNA. Positions 22-58 constitute a Collagen-like domain; it reads GCTGPPGPPGHPGPPGIRGPPGIRGIPGLPGPPGTPG. Residues 22–61 are disordered; that stretch reads GCTGPPGPPGHPGPPGIRGPPGIRGIPGLPGPPGTPGPSV. Positions 26–39 are enriched in pro residues; sequence PPGPPGHPGPPGIR. A C1q domain is found at 64–191; it reads PCHRQSAFTV…VTIYFSGFLT (128 aa).

The protein resides in the secreted. This is Protein HP-20 homolog from Bos taurus (Bovine).